The primary structure comprises 1226 residues: Cytosolic carboxypeptidase 1 (1226 aa).

Positions 599–619 (TEDDEDTESNSSVEQASVEVP) are disordered. The Peptidase M14 domain maps to 848 to 1138 (YPYTYSTLQM…KFCVGLLRLK (291 aa)). Positions 920, 923, and 1017 each coordinate Zn(2+). Glu1102 serves as the catalytic Proton donor/acceptor. Ser1168 bears the Phosphoserine mark. A disordered region spans residues 1206–1226 (YEPSAQEEVLSDSELSRTYLP).

The protein belongs to the peptidase M14 family. As to quaternary structure, interacts with MYLK. Zn(2+) serves as cofactor.

Its subcellular location is the cytoplasm. It is found in the cytosol. The protein localises to the nucleus. It localises to the mitochondrion. It carries out the reaction (L-glutamyl)(n+1)-gamma-L-glutamyl-L-glutamyl-[protein] + H2O = (L-glutamyl)(n)-gamma-L-glutamyl-L-glutamyl-[protein] + L-glutamate. The catalysed reaction is C-terminal L-alpha-aminoacyl-L-glutamyl-L-glutamyl-[tubulin] + H2O = C-terminal L-alpha-aminoacyl-L-glutamyl-[tubulin] + L-glutamate. Its function is as follows. Metallocarboxypeptidase that mediates protein deglutamylation of tubulin and non-tubulin target proteins. Catalyzes the removal of polyglutamate side chains present on the gamma-carboxyl group of glutamate residues within the C-terminal tail of alpha- and beta-tubulin. Specifically cleaves tubulin long-side-chains, while it is not able to remove the branching point glutamate. Also catalyzes the removal of polyglutamate residues from the carboxy-terminus of alpha-tubulin as well as non-tubulin proteins such as MYLK. Involved in KLF4 deglutamylation which promotes KLF4 proteasome-mediated degradation, thereby negatively regulating cell pluripotency maintenance and embryogenesis. In Homo sapiens (Human), this protein is Cytosolic carboxypeptidase 1.